A 133-amino-acid chain; its full sequence is Small ribosomal subunit protein uS8 (133 aa).

Belongs to the universal ribosomal protein uS8 family. In terms of assembly, part of the 30S ribosomal subunit. Contacts proteins S5 and S12.

Its function is as follows. One of the primary rRNA binding proteins, it binds directly to 16S rRNA central domain where it helps coordinate assembly of the platform of the 30S subunit. The chain is Small ribosomal subunit protein uS8 from Deinococcus radiodurans (strain ATCC 13939 / DSM 20539 / JCM 16871 / CCUG 27074 / LMG 4051 / NBRC 15346 / NCIMB 9279 / VKM B-1422 / R1).